A 229-amino-acid polypeptide reads, in one-letter code: Urease accessory protein UreF (229 aa).

It belongs to the UreF family. In terms of assembly, ureD, UreF and UreG form a complex that acts as a GTP-hydrolysis-dependent molecular chaperone, activating the urease apoprotein by helping to assemble the nickel containing metallocenter of UreC. The UreE protein probably delivers the nickel.

It localises to the cytoplasm. Functionally, required for maturation of urease via the functional incorporation of the urease nickel metallocenter. The polypeptide is Urease accessory protein UreF (Staphylococcus epidermidis (strain ATCC 12228 / FDA PCI 1200)).